A 311-amino-acid polypeptide reads, in one-letter code: Chalcone synthase 4 (311 aa).

The active site involves C164.

It belongs to the thiolase-like superfamily. Chalcone/stilbene synthases family.

The enzyme catalyses (E)-4-coumaroyl-CoA + 3 malonyl-CoA + 3 H(+) = 2',4,4',6'-tetrahydroxychalcone + 3 CO2 + 4 CoA. It participates in secondary metabolite biosynthesis; flavonoid biosynthesis. Its function is as follows. The primary product of this enzyme is 4,2',4',6'-tetrahydroxychalcone (also termed naringenin-chalcone or chalcone) which can under specific conditions spontaneously isomerize into naringenin. In Trifolium subterraneum (Subterranean clover), this protein is Chalcone synthase 4 (CHS4).